Reading from the N-terminus, the 426-residue chain is Enolase (426 aa).

Position 163 (Gln163) interacts with (2R)-2-phosphoglycerate. Glu205 (proton donor) is an active-site residue. Positions 242, 285, and 312 each coordinate Mg(2+). Residues Lys337, Arg366, Ser367, and Lys388 each coordinate (2R)-2-phosphoglycerate. The active-site Proton acceptor is the Lys337.

The protein belongs to the enolase family. Mg(2+) is required as a cofactor.

Its subcellular location is the cytoplasm. The protein localises to the secreted. It is found in the cell surface. The catalysed reaction is (2R)-2-phosphoglycerate = phosphoenolpyruvate + H2O. Its pathway is carbohydrate degradation; glycolysis; pyruvate from D-glyceraldehyde 3-phosphate: step 4/5. Its function is as follows. Catalyzes the reversible conversion of 2-phosphoglycerate (2-PG) into phosphoenolpyruvate (PEP). It is essential for the degradation of carbohydrates via glycolysis. This Nitrobacter winogradskyi (strain ATCC 25391 / DSM 10237 / CIP 104748 / NCIMB 11846 / Nb-255) protein is Enolase.